Reading from the N-terminus, the 292-residue chain is Protein LicB (292 aa).

2 EamA domains span residues 70–139 (ALSG…LLAI) and 160–286 (LGWS…VTLY).

The chain is Protein LicB (licB) from Haemophilus influenzae (strain ATCC 51907 / DSM 11121 / KW20 / Rd).